Consider the following 207-residue polypeptide: Proteasome subunit beta 1 (207 aa).

The propeptide at 1–9 is removed in mature form; by autocatalysis; it reads MWALDKIKG. Residue Thr-10 is the Nucleophile of the active site.

It belongs to the peptidase T1B family. The 20S proteasome core is composed of 14 alpha and 14 beta subunits that assemble into four stacked heptameric rings, resulting in a barrel-shaped structure. The two inner rings, each composed of seven catalytic beta subunits, are sandwiched by two outer rings, each composed of seven alpha subunits. The catalytic chamber with the active sites is on the inside of the barrel. Has a gated structure, the ends of the cylinder being occluded by the N-termini of the alpha-subunits. Is capped at one or both ends by the proteasome regulatory ATPase, PAN.

It localises to the cytoplasm. It catalyses the reaction Cleavage of peptide bonds with very broad specificity.. Its activity is regulated as follows. The formation of the proteasomal ATPase PAN-20S proteasome complex, via the docking of the C-termini of PAN into the intersubunit pockets in the alpha-rings, triggers opening of the gate for substrate entry. Interconversion between the open-gate and close-gate conformations leads to a dynamic regulation of the 20S proteasome proteolysis activity. Functionally, component of the proteasome core, a large protease complex with broad specificity involved in protein degradation. This chain is Proteasome subunit beta 1, found in Thermococcus sibiricus (strain DSM 12597 / MM 739).